We begin with the raw amino-acid sequence, 70 residues long: MSPLFVVLLIATTTFYHSDAFAVKRDHHMCDRTGKACLNNAECCRNEKCVLVDPNIRCFTVPCGTACVKR.

An N-terminal signal peptide occupies residues Met1–Ala20.

Expressed by the venom gland.

The protein localises to the secreted. In Tityus serrulatus (Brazilian scorpion), this protein is Putative venom toxin Ts29.